The sequence spans 217 residues: Ribulose-phosphate 3-epimerase (217 aa).

S6 contributes to the substrate binding site. A divalent metal cation-binding residues include H29, D31, and H62. The active-site Proton acceptor is the D31. Residues H62, 138–141 (GFGG), 171–173 (DGG), and 193–194 (GS) contribute to the substrate site. D171 contacts a divalent metal cation. The active-site Proton donor is the D171.

The protein belongs to the ribulose-phosphate 3-epimerase family. It depends on a divalent metal cation as a cofactor.

The catalysed reaction is D-ribulose 5-phosphate = D-xylulose 5-phosphate. The protein operates within carbohydrate degradation. Its function is as follows. Catalyzes the reversible epimerization of D-ribulose 5-phosphate to D-xylulose 5-phosphate. This chain is Ribulose-phosphate 3-epimerase, found in Helicobacter pylori (strain ATCC 700392 / 26695) (Campylobacter pylori).